A 314-amino-acid chain; its full sequence is 4-hydroxy-3-methylbut-2-enyl diphosphate reductase (314 aa).

[4Fe-4S] cluster is bound at residue Cys12. (2E)-4-hydroxy-3-methylbut-2-enyl diphosphate is bound by residues His43 and His81. Residues His43 and His81 each coordinate dimethylallyl diphosphate. Isopentenyl diphosphate contacts are provided by His43 and His81. Residue Cys103 coordinates [4Fe-4S] cluster. His131 lines the (2E)-4-hydroxy-3-methylbut-2-enyl diphosphate pocket. His131 is a binding site for dimethylallyl diphosphate. Residue His131 participates in isopentenyl diphosphate binding. The active-site Proton donor is the Glu133. Residue Thr170 participates in (2E)-4-hydroxy-3-methylbut-2-enyl diphosphate binding. Cys198 serves as a coordination point for [4Fe-4S] cluster. 3 residues coordinate (2E)-4-hydroxy-3-methylbut-2-enyl diphosphate: Ser226, Asn228, and Ser271. Positions 226, 228, and 271 each coordinate dimethylallyl diphosphate. Residues Ser226, Asn228, and Ser271 each contribute to the isopentenyl diphosphate site.

It belongs to the IspH family. It depends on [4Fe-4S] cluster as a cofactor.

The enzyme catalyses isopentenyl diphosphate + 2 oxidized [2Fe-2S]-[ferredoxin] + H2O = (2E)-4-hydroxy-3-methylbut-2-enyl diphosphate + 2 reduced [2Fe-2S]-[ferredoxin] + 2 H(+). The catalysed reaction is dimethylallyl diphosphate + 2 oxidized [2Fe-2S]-[ferredoxin] + H2O = (2E)-4-hydroxy-3-methylbut-2-enyl diphosphate + 2 reduced [2Fe-2S]-[ferredoxin] + 2 H(+). Its pathway is isoprenoid biosynthesis; dimethylallyl diphosphate biosynthesis; dimethylallyl diphosphate from (2E)-4-hydroxy-3-methylbutenyl diphosphate: step 1/1. It participates in isoprenoid biosynthesis; isopentenyl diphosphate biosynthesis via DXP pathway; isopentenyl diphosphate from 1-deoxy-D-xylulose 5-phosphate: step 6/6. Catalyzes the conversion of 1-hydroxy-2-methyl-2-(E)-butenyl 4-diphosphate (HMBPP) into a mixture of isopentenyl diphosphate (IPP) and dimethylallyl diphosphate (DMAPP). Acts in the terminal step of the DOXP/MEP pathway for isoprenoid precursor biosynthesis. The polypeptide is 4-hydroxy-3-methylbut-2-enyl diphosphate reductase (Shouchella clausii (strain KSM-K16) (Alkalihalobacillus clausii)).